A 688-amino-acid polypeptide reads, in one-letter code: Glycine--tRNA ligase beta subunit (688 aa).

It belongs to the class-II aminoacyl-tRNA synthetase family. In terms of assembly, tetramer of two alpha and two beta subunits.

The protein localises to the cytoplasm. It carries out the reaction tRNA(Gly) + glycine + ATP = glycyl-tRNA(Gly) + AMP + diphosphate. The polypeptide is Glycine--tRNA ligase beta subunit (Chromohalobacter salexigens (strain ATCC BAA-138 / DSM 3043 / CIP 106854 / NCIMB 13768 / 1H11)).